Consider the following 337-residue polypeptide: G-protein coupled receptor 65 (337 aa).

The Extracellular portion of the chain corresponds to 1 to 5 (MNSTC). A glycan (N-linked (GlcNAc...) asparagine) is linked at asparagine 2. 2 cysteine pairs are disulfide-bonded: cysteine 5/cysteine 160 and cysteine 87/cysteine 170. Residues 6–42 (IEEQHDLDHYLFPIVYIFVIIVSIPANIGSLCVSFLQ) form a helical membrane-spanning segment. The Cytoplasmic segment spans residues 43 to 46 (AKKE). Residues 47 to 77 (SELGIYLFSLSLSDLLYALTLPLWIDYTWNK) form a helical membrane-spanning segment. Residues 78 to 82 (DNWTF) lie on the Extracellular side of the membrane. Asparagine 79 carries N-linked (GlcNAc...) asparagine glycosylation. Residues 83–118 (SPALCKGSAFLMYMNFYSSTAFLTCIAVDRYLAVVY) traverse the membrane as a helical segment. Residues 119–126 (PLKFFFLR) lie on the Cytoplasmic side of the membrane. Residues 127–153 (TRRFALMVSLSIWILETIFNAVMLWED) traverse the membrane as a helical segment. Topologically, residues 154–174 (ETVVEYCDAEKSNFTLCYDKY) are extracellular. An extracellular loop 2 (ECL2) region spans residues 154 to 174 (ETVVEYCDAEKSNFTLCYDKY). Asparagine 166 is a glycosylation site (N-linked (GlcNAc...) asparagine). The chain crosses the membrane as a helical span at residues 175 to 212 (PLEKWQINLNLFRTCTGYAIPLVTILICNRKVYQAVRH). Over 213–216 (NKAT) the chain is Cytoplasmic. A helical transmembrane segment spans residues 217–252 (ENKEKKRIIKLLVSITVTFVLCFTPFHVMLLIRCIL). The Extracellular segment spans residues 253 to 264 (EHAVNFEDHSNS). Residues 265 to 293 (GKRTYTMYRITVALTSLNCVADPILYCFV) traverse the membrane as a helical segment. The Cytoplasmic portion of the chain corresponds to 294–337 (TETGRYDMWNILKFCTGRCNTSQRQRKRILSVSTKDTMELEVLE).

Belongs to the G-protein coupled receptor 1 family. In terms of tissue distribution, predominantly expressed in thymus, spleen, lymph nodes, small intestine, lung, placenta and peripheral blood leukocytes.

Its subcellular location is the cell membrane. It is found in the early endosome membrane. The protein localises to the late endosome membrane. Activated by a network of residues that connects an extracellular-facing cavity to Glu-142, a conserved charged residue buried in the transmembrane core of the receptor. Protonation likely drives conformational changes in extracellular loop 2 (ECL2), which stabilizes movement of transmembrane 3 (TM3) and a series of rearrangements that connect the extracellular-facing cavity to Glu-142, a residue only conserved in proton-sensing G-protein coupled receptors. Activated by BTB09089, a positive allosteric modulator. Proton-sensing G-protein coupled receptor activated by extracellular pH, which is required to monitor pH changes and generate adaptive reactions. Activated by an optimal pH of 7.4. Ligand binding causes a conformation change that triggers signaling via guanine nucleotide-binding proteins (G proteins) and modulates the activity of downstream effectors, such as adenylate cyclase. GPR65 is mainly coupled to G(s) G proteins and mediates activation of adenylate cyclase activity. May also act as a receptor for the glycosphingolipid psychosine (PSY) and several related glycosphingolipids. Plays a role in immune response by maintaining lysosome function and regulating T-cell metabolism. Acts as a regulator of inflammation by mediating pH-sensing of extracellular acidification which takes place in inflamed tissues: activation regulates endo-lysosomal function of immune cells and T-cell metabolism. Constitutively active in endosomes and stimulates adenylate cyclase production from endosomes independently from extracellular pH changes. This is G-protein coupled receptor 65 from Homo sapiens (Human).